A 283-amino-acid chain; its full sequence is Cyclin-C (283 aa).

A Cyclin N-terminal domain is found at Asn46 to Glu144. A disordered region spans residues Thr252–Ser283. Over residues Pro272 to Ser283 the composition is skewed to polar residues. Phosphoserine is present on Ser275.

This sequence belongs to the cyclin family. Cyclin C subfamily. Component of the Mediator complex, which is composed of MED1, MED4, MED6, MED7, MED8, MED9, MED10, MED11, MED12, MED13, MED13L, MED14, MED15, MED16, MED17, MED18, MED19, MED20, MED21, MED22, MED23, MED24, MED25, MED26, MED27, MED29, MED30, MED31, CCNC, CDK8 and CDC2L6/CDK11. The MED12, MED13, CCNC and CDK8 subunits form a distinct module termed the CDK8 module. Mediator containing the CDK8 module is less active than Mediator lacking this module in supporting transcriptional activation. Individual preparations of the Mediator complex lacking one or more distinct subunits have been variously termed ARC, CRSP, DRIP, PC2, SMCC and TRAP. The cylin/CDK pair formed by CCNC/CDK8 also associates with the large subunit of RNA polymerase II. Highest levels in pancreas. High levels in heart, liver, skeletal muscle and kidney. Low levels in brain.

The protein localises to the nucleus. Its function is as follows. Component of the Mediator complex, a coactivator involved in regulated gene transcription of nearly all RNA polymerase II-dependent genes. Mediator functions as a bridge to convey information from gene-specific regulatory proteins to the basal RNA polymerase II transcription machinery. Mediator is recruited to promoters by direct interactions with regulatory proteins and serves as a scaffold for the assembly of a functional preinitiation complex with RNA polymerase II and the general transcription factors. Binds to and activates cyclin-dependent kinase CDK8 that phosphorylates the CTD (C-terminal domain) of the large subunit of RNA polymerase II (RNAp II), which may inhibit the formation of a transcription initiation complex. The polypeptide is Cyclin-C (CCNC) (Homo sapiens (Human)).